Reading from the N-terminus, the 354-residue chain is Phosphate acyltransferase (354 aa).

Belongs to the PlsX family. As to quaternary structure, homodimer. Probably interacts with PlsY.

Its subcellular location is the cytoplasm. The catalysed reaction is a fatty acyl-[ACP] + phosphate = an acyl phosphate + holo-[ACP]. The protein operates within lipid metabolism; phospholipid metabolism. Functionally, catalyzes the reversible formation of acyl-phosphate (acyl-PO(4)) from acyl-[acyl-carrier-protein] (acyl-ACP). This enzyme utilizes acyl-ACP as fatty acyl donor, but not acyl-CoA. This is Phosphate acyltransferase from Nitrobacter hamburgensis (strain DSM 10229 / NCIMB 13809 / X14).